The primary structure comprises 619 residues: Dihydroxy-acid dehydratase (619 aa).

Residue D81 coordinates Mg(2+). C122 provides a ligand contact to [2Fe-2S] cluster. Mg(2+) is bound by residues D123 and K124. K124 is modified (N6-carboxylysine). C198 provides a ligand contact to [2Fe-2S] cluster. E494 is a Mg(2+) binding site. Catalysis depends on S520, which acts as the Proton acceptor.

It belongs to the IlvD/Edd family. As to quaternary structure, homodimer. [2Fe-2S] cluster serves as cofactor. The cofactor is Mg(2+).

It catalyses the reaction (2R)-2,3-dihydroxy-3-methylbutanoate = 3-methyl-2-oxobutanoate + H2O. The catalysed reaction is (2R,3R)-2,3-dihydroxy-3-methylpentanoate = (S)-3-methyl-2-oxopentanoate + H2O. It functions in the pathway amino-acid biosynthesis; L-isoleucine biosynthesis; L-isoleucine from 2-oxobutanoate: step 3/4. Its pathway is amino-acid biosynthesis; L-valine biosynthesis; L-valine from pyruvate: step 3/4. Its function is as follows. Functions in the biosynthesis of branched-chain amino acids. Catalyzes the dehydration of (2R,3R)-2,3-dihydroxy-3-methylpentanoate (2,3-dihydroxy-3-methylvalerate) into 2-oxo-3-methylpentanoate (2-oxo-3-methylvalerate) and of (2R)-2,3-dihydroxy-3-methylbutanoate (2,3-dihydroxyisovalerate) into 2-oxo-3-methylbutanoate (2-oxoisovalerate), the penultimate precursor to L-isoleucine and L-valine, respectively. This is Dihydroxy-acid dehydratase from Neisseria gonorrhoeae (strain ATCC 700825 / FA 1090).